Reading from the N-terminus, the 209-residue chain is 3-demethoxyubiquinol 3-hydroxylase (209 aa).

Residues E58, E88, H91, E140, E172, and H175 each contribute to the Fe cation site.

This sequence belongs to the COQ7 family. It depends on Fe cation as a cofactor.

The protein resides in the cell membrane. The catalysed reaction is a 5-methoxy-2-methyl-3-(all-trans-polyprenyl)benzene-1,4-diol + AH2 + O2 = a 3-demethylubiquinol + A + H2O. It participates in cofactor biosynthesis; ubiquinone biosynthesis. In terms of biological role, catalyzes the hydroxylation of 2-nonaprenyl-3-methyl-6-methoxy-1,4-benzoquinol during ubiquinone biosynthesis. This is 3-demethoxyubiquinol 3-hydroxylase from Polynucleobacter asymbioticus (strain DSM 18221 / CIP 109841 / QLW-P1DMWA-1) (Polynucleobacter necessarius subsp. asymbioticus).